A 382-amino-acid polypeptide reads, in one-letter code: 8-amino-7-oxononanoate synthase (382 aa).

The substrate site is built by R21 and H131. Pyridoxal 5'-phosphate-binding residues include S178, H206, and T232. K235 is modified (N6-(pyridoxal phosphate)lysine). Residue T349 participates in substrate binding.

Belongs to the class-II pyridoxal-phosphate-dependent aminotransferase family. BioF subfamily. As to quaternary structure, homodimer. Requires pyridoxal 5'-phosphate as cofactor.

The enzyme catalyses 6-carboxyhexanoyl-[ACP] + L-alanine + H(+) = (8S)-8-amino-7-oxononanoate + holo-[ACP] + CO2. Its pathway is cofactor biosynthesis; biotin biosynthesis. Functionally, catalyzes the decarboxylative condensation of pimeloyl-[acyl-carrier protein] and L-alanine to produce 8-amino-7-oxononanoate (AON), [acyl-carrier protein], and carbon dioxide. The polypeptide is 8-amino-7-oxononanoate synthase (Serratia marcescens).